A 96-amino-acid polypeptide reads, in one-letter code: Co-chaperonin GroES (96 aa).

It belongs to the GroES chaperonin family. Heptamer of 7 subunits arranged in a ring. Interacts with the chaperonin GroEL.

It localises to the cytoplasm. Its function is as follows. Together with the chaperonin GroEL, plays an essential role in assisting protein folding. The GroEL-GroES system forms a nano-cage that allows encapsulation of the non-native substrate proteins and provides a physical environment optimized to promote and accelerate protein folding. GroES binds to the apical surface of the GroEL ring, thereby capping the opening of the GroEL channel. This Aromatoleum aromaticum (strain DSM 19018 / LMG 30748 / EbN1) (Azoarcus sp. (strain EbN1)) protein is Co-chaperonin GroES.